A 511-amino-acid polypeptide reads, in one-letter code: Lysine--tRNA ligase (511 aa).

Mg(2+) is bound by residues Glu421 and Glu428.

The protein belongs to the class-II aminoacyl-tRNA synthetase family. Homodimer. It depends on Mg(2+) as a cofactor.

Its subcellular location is the cytoplasm. It carries out the reaction tRNA(Lys) + L-lysine + ATP = L-lysyl-tRNA(Lys) + AMP + diphosphate. This is Lysine--tRNA ligase from Janthinobacterium sp. (strain Marseille) (Minibacterium massiliensis).